Consider the following 288-residue polypeptide: Lipoyl synthase (288 aa).

[4Fe-4S] cluster is bound by residues cysteine 39, cysteine 44, cysteine 50, cysteine 65, cysteine 69, cysteine 72, and serine 276. The Radical SAM core domain occupies 51-265 (WGKGTATFMI…KETGLKKGFE (215 aa)).

This sequence belongs to the radical SAM superfamily. Lipoyl synthase family. The cofactor is [4Fe-4S] cluster.

The protein localises to the cytoplasm. It catalyses the reaction [[Fe-S] cluster scaffold protein carrying a second [4Fe-4S](2+) cluster] + N(6)-octanoyl-L-lysyl-[protein] + 2 oxidized [2Fe-2S]-[ferredoxin] + 2 S-adenosyl-L-methionine + 4 H(+) = [[Fe-S] cluster scaffold protein] + N(6)-[(R)-dihydrolipoyl]-L-lysyl-[protein] + 4 Fe(3+) + 2 hydrogen sulfide + 2 5'-deoxyadenosine + 2 L-methionine + 2 reduced [2Fe-2S]-[ferredoxin]. The protein operates within protein modification; protein lipoylation via endogenous pathway; protein N(6)-(lipoyl)lysine from octanoyl-[acyl-carrier-protein]: step 2/2. Catalyzes the radical-mediated insertion of two sulfur atoms into the C-6 and C-8 positions of the octanoyl moiety bound to the lipoyl domains of lipoate-dependent enzymes, thereby converting the octanoylated domains into lipoylated derivatives. The polypeptide is Lipoyl synthase (Bacteroides fragilis (strain YCH46)).